The following is a 102-amino-acid chain: Small ribosomal subunit protein uS10 (102 aa).

This sequence belongs to the universal ribosomal protein uS10 family. Part of the 30S ribosomal subunit.

Functionally, involved in the binding of tRNA to the ribosomes. In Pelagibacter ubique (strain HTCC1062), this protein is Small ribosomal subunit protein uS10.